The following is a 301-amino-acid chain: Glycine--tRNA ligase alpha subunit (301 aa).

It belongs to the class-II aminoacyl-tRNA synthetase family. Tetramer of two alpha and two beta subunits.

It is found in the cytoplasm. The enzyme catalyses tRNA(Gly) + glycine + ATP = glycyl-tRNA(Gly) + AMP + diphosphate. This Shewanella denitrificans (strain OS217 / ATCC BAA-1090 / DSM 15013) protein is Glycine--tRNA ligase alpha subunit.